A 200-amino-acid chain; its full sequence is Dephospho-CoA kinase (200 aa).

The DPCK domain maps to 3 to 200; sequence IFGLTGGIGS…LNVNNKCNMD (198 aa). Residue 11-16 participates in ATP binding; the sequence is GSGKSL.

Belongs to the CoaE family.

Its subcellular location is the cytoplasm. The enzyme catalyses 3'-dephospho-CoA + ATP = ADP + CoA + H(+). It functions in the pathway cofactor biosynthesis; coenzyme A biosynthesis; CoA from (R)-pantothenate: step 5/5. Catalyzes the phosphorylation of the 3'-hydroxyl group of dephosphocoenzyme A to form coenzyme A. The sequence is that of Dephospho-CoA kinase from Ehrlichia canis (strain Jake).